A 239-amino-acid polypeptide reads, in one-letter code: Ribonuclease PH (239 aa).

Phosphate contacts are provided by residues Arg-86 and 124 to 126 (GTR).

This sequence belongs to the RNase PH family. As to quaternary structure, homohexameric ring arranged as a trimer of dimers.

The enzyme catalyses tRNA(n+1) + phosphate = tRNA(n) + a ribonucleoside 5'-diphosphate. In terms of biological role, phosphorolytic 3'-5' exoribonuclease that plays an important role in tRNA 3'-end maturation. Removes nucleotide residues following the 3'-CCA terminus of tRNAs; can also add nucleotides to the ends of RNA molecules by using nucleoside diphosphates as substrates, but this may not be physiologically important. Probably plays a role in initiation of 16S rRNA degradation (leading to ribosome degradation) during starvation. This is Ribonuclease PH from Rickettsia akari (strain Hartford).